We begin with the raw amino-acid sequence, 393 residues long: D-alanyl-D-alanine carboxypeptidase DacA (393 aa).

An N-terminal signal peptide occupies residues 1–18 (MLKRTTKIAFLSSFVALS). Ser-65 serves as the catalytic Acyl-ester intermediate. Catalysis depends on Lys-68, which acts as the Proton acceptor. Ser-128 is an active-site residue. Lys-231 contacts substrate.

Belongs to the peptidase S11 family.

It is found in the cell inner membrane. The enzyme catalyses Preferential cleavage: (Ac)2-L-Lys-D-Ala-|-D-Ala. Also transpeptidation of peptidyl-alanyl moieties that are N-acyl substituents of D-alanine.. It functions in the pathway cell wall biogenesis; peptidoglycan biosynthesis. Removes C-terminal D-alanyl residues from sugar-peptide cell wall precursors. This Haemophilus influenzae (strain ATCC 51907 / DSM 11121 / KW20 / Rd) protein is D-alanyl-D-alanine carboxypeptidase DacA (dacA).